The sequence spans 216 residues: Putative germin-like protein 2-1 (216 aa).

An N-terminal signal peptide occupies residues 1–21 (MASTWFFLLALLAVSISNAFA). A disulfide bond links C31 and C46. The 151-residue stretch at 60-210 (SGLHMAGNTS…AFQVEKKIVD (151 aa)) folds into the Cupin type-1 domain. Residue N67 is glycosylated (N-linked (GlcNAc...) asparagine). 4 residues coordinate Mn(2+): H108, H110, E115, and H156.

The protein belongs to the germin family. In terms of assembly, oligomer (believed to be a pentamer but probably hexamer).

It localises to the secreted. It is found in the extracellular space. The protein resides in the apoplast. Functionally, may play a role in plant defense. Probably has no oxalate oxidase activity even if the active site is conserved. The polypeptide is Putative germin-like protein 2-1 (Oryza sativa subsp. japonica (Rice)).